The chain runs to 485 residues: Glycogen synthase (485 aa).

Lys17 is a binding site for ADP-alpha-D-glucose.

The protein belongs to the glycosyltransferase 1 family. Bacterial/plant glycogen synthase subfamily.

It carries out the reaction [(1-&gt;4)-alpha-D-glucosyl](n) + ADP-alpha-D-glucose = [(1-&gt;4)-alpha-D-glucosyl](n+1) + ADP + H(+). It functions in the pathway glycan biosynthesis; glycogen biosynthesis. Its function is as follows. Synthesizes alpha-1,4-glucan chains using ADP-glucose. This chain is Glycogen synthase, found in Novosphingobium aromaticivorans (strain ATCC 700278 / DSM 12444 / CCUG 56034 / CIP 105152 / NBRC 16084 / F199).